A 658-amino-acid chain; its full sequence is Interferon-induced GTP-binding protein Mx1 (658 aa).

The residue at position 1 (M1) is an N-acetylmethionine. The interval 1–20 is disordered; the sequence is MVNSKGKITDSDPGSSHLLL. Residues 65–338 enclose the Dynamin-type G domain; it reads DLALPAIAVI…LITHICKTLP (274 aa). Residues 75 to 82 form a G1 motif region; that stretch reads GDQSSGKS. Residue 75–82 participates in GTP binding; that stretch reads GDQSSGKS. Residues 100 to 102 are G2 motif; it reads VTR. The tract at residues 176–179 is G3 motif; sequence DLPG. GTP-binding positions include 176–180 and 245–248; these read DLPGI and TKPD. A G4 motif region spans residues 245-248; that stretch reads TKPD. A G5 motif region spans residues 277 to 280; the sequence is KCRG. A bundle signaling element (BSE) region spans residues 339 to 364; the sequence is LLENQIKENYEKITEELQKYGSDVPE. Positions 364-531 are middle domain; the sequence is EEEHEKMFFL…HFQMEQIVYC (168 aa). A stalk region spans residues 365–628; it reads EEHEKMFFLI…KDTHNWLLKE (264 aa). A critical for lipid-binding region spans residues 551-554; it reads KDRK. A GED domain is found at 570 to 658; that stretch reads LSDIFEHLLA…ARRRLAKFPG (89 aa).

Belongs to the TRAFAC class dynamin-like GTPase superfamily. Dynamin/Fzo/YdjA family. Homooligomer. Oligomerizes into multimeric filamentous or ring-like structures by virtue of its stalk domain. Oligomerization is critical for GTPase activity, protein stability, and recognition of viral target structures. Interacts with TRPC1, TRPC3, TRPC4, TRPC5, TRPC6 and TRPC7. Interacts with HSPA5. Interacts with TUBB/TUBB5. Interacts with DDX39A and DDX39B. In terms of processing, ISGylated.

Its subcellular location is the cytoplasm. It localises to the endoplasmic reticulum membrane. It is found in the perinuclear region. In terms of biological role, interferon-induced dynamin-like GTPase with antiviral activity. This is Interferon-induced GTP-binding protein Mx1 (MX1) from Eumetopias jubatus (Steller sea lion).